We begin with the raw amino-acid sequence, 226 residues long: Glyceraldehyde 3-phosphate phosphatase (226 aa).

It belongs to the HAD-like hydrolase superfamily. It depends on Mg(2+) as a cofactor.

Its function is as follows. Catalyzes the dephosphorylation of D,L-glyceraldehyde 3-phosphate in vitro. The sequence is that of Glyceraldehyde 3-phosphate phosphatase from Methanothermobacter thermautotrophicus (strain ATCC 29096 / DSM 1053 / JCM 10044 / NBRC 100330 / Delta H) (Methanobacterium thermoautotrophicum).